The following is a 573-amino-acid chain: Proton-coupled zinc antiporter SLC30A9, mitochondrial (573 aa).

Residues Asn-66–Thr-108 form a disordered region. The segment covering Ala-90 to Pro-104 has biased composition (low complexity). A run of 5 helical transmembrane segments spans residues Val-244–Val-264, Gly-319–Leu-339, Leu-347–Val-367, Val-397–Gly-417, and Ser-429–Thr-449. Positions Leu-467–Leu-471 match the LXXLL motif motif.

The protein belongs to the cation diffusion facilitator (CDF) transporter (TC 2.A.4) family. SLC30A subfamily.

Its subcellular location is the mitochondrion membrane. It is found in the nucleus. It localises to the endoplasmic reticulum. It carries out the reaction Zn(2+)(in) + 2 H(+)(out) = Zn(2+)(out) + 2 H(+)(in). Mitochondrial proton-coupled zinc ion antiporter mediating the export of zinc from the mitochondria and involved in zinc homeostasis, zinc mobilization as well as mitochondrial morphology and health. In nucleus, may function as a secondary coactivator for nuclear receptors. This is Proton-coupled zinc antiporter SLC30A9, mitochondrial (slc30a9) from Danio rerio (Zebrafish).